The sequence spans 684 residues: Methionine--tRNA ligase (684 aa).

The 'HIGH' region motif lies at 17–27 (PYANGKAHVGH). The Zn(2+) site is built by C148, C151, C160, and C164. The short motif at 330–334 (TFSKS) is the 'KMSKS' region element. Position 333 (K333) interacts with ATP. A tRNA-binding domain is found at 582–684 (DFSKLDIRIG…KETNPGTCIH (103 aa)).

It belongs to the class-I aminoacyl-tRNA synthetase family. MetG type 1 subfamily. In terms of assembly, homodimer. It depends on Zn(2+) as a cofactor.

Its subcellular location is the cytoplasm. It carries out the reaction tRNA(Met) + L-methionine + ATP = L-methionyl-tRNA(Met) + AMP + diphosphate. In terms of biological role, is required not only for elongation of protein synthesis but also for the initiation of all mRNA translation through initiator tRNA(fMet) aminoacylation. The sequence is that of Methionine--tRNA ligase from Methanococcoides burtonii (strain DSM 6242 / NBRC 107633 / OCM 468 / ACE-M).